The following is a 169-amino-acid chain: MKPSSSNSRSKGHAKARRKTREELDQEARDRKRQKKRRGHAPGSRAAGGNTTSGSKGQNAPKDPRIGSKTPIPLGVAEKVTKQHKPKSEKPMLSPQAELELLETDERLDALLERLEAGETLRAEEQSWVDVKLDRIDELMQKLGLSYDDDEEEEEDEKQEDMMRLLRGN.

2 disordered regions span residues 1–99 (MKPS…QAEL) and 146–169 (SYDD…LRGN). Over residues 10-19 (SKGHAKARRK) the composition is skewed to basic residues. Over residues 20–30 (TREELDQEARD) the composition is skewed to basic and acidic residues. Basic residues predominate over residues 31–40 (RKRQKKRRGH). Polar residues predominate over residues 49 to 58 (GNTTSGSKGQ). The span at 147-159 (YDDDEEEEEDEKQ) shows a compositional bias: acidic residues. Positions 160-169 (EDMMRLLRGN) are enriched in basic and acidic residues.

Belongs to the YihI family. In terms of assembly, interacts with Der.

Functionally, a GTPase-activating protein (GAP) that modifies Der/EngA GTPase function. May play a role in ribosome biogenesis. The polypeptide is Der GTPase-activating protein YihI (Escherichia coli O45:K1 (strain S88 / ExPEC)).